Here is an 89-residue protein sequence, read N- to C-terminus: UPF0250 protein Bphyt_0500 (89 aa).

This sequence belongs to the UPF0250 family.

This chain is UPF0250 protein Bphyt_0500, found in Paraburkholderia phytofirmans (strain DSM 17436 / LMG 22146 / PsJN) (Burkholderia phytofirmans).